A 299-amino-acid polypeptide reads, in one-letter code: Regucalcin (299 aa).

E18 is a binding site for a divalent metal cation. The substrate site is built by R101, N103, and E121. Positions 154 and 204 each coordinate a divalent metal cation. Catalysis depends on D204, which acts as the Proton donor/acceptor. K244 and K253 each carry N6-succinyllysine.

The protein belongs to the SMP-30/CGR1 family. As to quaternary structure, monomer. It depends on Zn(2+) as a cofactor. Requires Mn(2+) as cofactor. The cofactor is Ca(2+). Mg(2+) serves as cofactor.

It localises to the cytoplasm. The catalysed reaction is D-glucono-1,5-lactone + H2O = D-gluconate + H(+). Its pathway is cofactor biosynthesis; L-ascorbate biosynthesis via UDP-alpha-D-glucuronate pathway; L-ascorbate from UDP-alpha-D-glucuronate: step 3/4. Gluconolactonase with low activity towards other sugar lactones, including gulonolactone and galactonolactone. Catalyzes a key step in ascorbic acid (vitamin C) biosynthesis. Can also hydrolyze diisopropyl phosphorofluoridate and phenylacetate (in vitro). Calcium-binding protein. Modulates Ca(2+) signaling, and Ca(2+)-dependent cellular processes and enzyme activities. In Sus scrofa (Pig), this protein is Regucalcin (RGN).